The primary structure comprises 208 residues: Large ribosomal subunit protein bL9 (208 aa).

Residues Gly-168–Glu-208 are disordered. Over residues Asn-188 to Ser-197 the composition is skewed to polar residues. Residues Glu-199 to Glu-208 show a composition bias toward basic and acidic residues.

It belongs to the bacterial ribosomal protein bL9 family.

Its function is as follows. Binds to the 23S rRNA. The chain is Large ribosomal subunit protein bL9 from Ehrlichia chaffeensis (strain ATCC CRL-10679 / Arkansas).